Here is a 180-residue protein sequence, read N- to C-terminus: Vacuolar ATPase assembly protein VMA22 (180 aa).

The stretch at 4–38 (QALREELDSKCLQLLSDLEELEAKRAALNARVEEG) forms a coiled coil. Residues 90–113 (TPEEVGPSEASLRRRKGPTKTKEL) form a disordered region.

In terms of assembly, accessory component of the multisubunit proton-transporting vacuolar (V)-ATPase protein pump. As to expression, predominantly expressed in the heart, liver, kidney and testis and at lower levels in the brain and lung. Undetectable in the spleen and muscles.

Its subcellular location is the endosome. It localises to the lysosome. It is found in the endoplasmic reticulum-Golgi intermediate compartment. The protein resides in the cytoplasmic vesicle. The protein localises to the COPI-coated vesicle. Its subcellular location is the endoplasmic reticulum. Functionally, accessory component of the proton-transporting vacuolar (V)-ATPase protein pump involved in intracellular iron homeostasis. In aerobic conditions, required for intracellular iron homeostasis, thus triggering the activity of Fe(2+) prolyl hydroxylase (PHD) enzymes, and leading to HIF1A hydroxylation and subsequent proteasomal degradation. Necessary for endolysosomal acidification and lysosomal degradation. May be involved in Golgi homeostasis. This is Vacuolar ATPase assembly protein VMA22 (Vma22) from Mus musculus (Mouse).